The chain runs to 115 residues: U3-lycotoxin-Ls1n (115 aa).

An N-terminal signal peptide occupies residues 1-20 (MKFVLLFGVLLVTLFSYSSA). Positions 21–44 (EMLDDFDQADEDELLSLIEKEEAR) are excised as a propeptide. Cystine bridges form between cysteine 48/cysteine 63, cysteine 55/cysteine 72, cysteine 62/cysteine 87, and cysteine 74/cysteine 85.

It belongs to the neurotoxin 19 (CSTX) family. 01 subfamily. Expressed by the venom gland.

The protein localises to the secreted. This is U3-lycotoxin-Ls1n from Lycosa singoriensis (Wolf spider).